Reading from the N-terminus, the 288-residue chain is uncharacterized protein (288 aa).

This is an uncharacterized protein from Ictaluridae (bullhead catfishes).